Consider the following 159-residue polypeptide: Large ribosomal subunit protein uL10 (159 aa).

This sequence belongs to the universal ribosomal protein uL10 family. Part of the ribosomal stalk of the 50S ribosomal subunit. The N-terminus interacts with L11 and the large rRNA to form the base of the stalk. The C-terminus forms an elongated spine to which L12 dimers bind in a sequential fashion forming a multimeric L10(L12)X complex.

Its function is as follows. Forms part of the ribosomal stalk, playing a central role in the interaction of the ribosome with GTP-bound translation factors. The protein is Large ribosomal subunit protein uL10 of Campylobacter jejuni subsp. jejuni serotype O:6 (strain 81116 / NCTC 11828).